The following is a 64-amino-acid chain: Large ribosomal subunit protein bL35 (64 aa).

The protein belongs to the bacterial ribosomal protein bL35 family.

The polypeptide is Large ribosomal subunit protein bL35 (Ectopseudomonas mendocina (strain ymp) (Pseudomonas mendocina)).